Reading from the N-terminus, the 154-residue chain is Interleukin-2 (154 aa).

Residues 1-20 form the signal peptide; it reads MYKLQFLSCIALTLALVANS. Threonine 23 is a glycosylation site (O-linked (GalNAc...) threonine). A disulfide bridge connects residues cysteine 78 and cysteine 126. Asparagine 111 carries N-linked (GlcNAc...) asparagine glycosylation.

The protein belongs to the IL-2 family.

The protein localises to the secreted. Its function is as follows. Cytokine produced by activated CD4-positive helper T-cells and to a lesser extend activated CD8-positive T-cells and natural killer (NK) cells that plays pivotal roles in the immune response and tolerance. Binds to a receptor complex composed of either the high-affinity trimeric IL-2R (IL2RA/CD25, IL2RB/CD122 and IL2RG/CD132) or the low-affinity dimeric IL-2R (IL2RB and IL2RG). Interaction with the receptor leads to oligomerization and conformation changes in the IL-2R subunits resulting in downstream signaling starting with phosphorylation of JAK1 and JAK3. In turn, JAK1 and JAK3 phosphorylate the receptor to form a docking site leading to the phosphorylation of several substrates including STAT5. This process leads to activation of several pathways including STAT, phosphoinositide-3-kinase/PI3K and mitogen-activated protein kinase/MAPK pathways. Functions as a T-cell growth factor and can increase NK-cell cytolytic activity as well. Promotes strong proliferation of activated B-cells and subsequently immunoglobulin production. Plays a pivotal role in regulating the adaptive immune system by controlling the survival and proliferation of regulatory T-cells, which are required for the maintenance of immune tolerance. Moreover, participates in the differentiation and homeostasis of effector T-cell subsets, including Th1, Th2, Th17 as well as memory CD8-positive T-cells. This chain is Interleukin-2 (IL2), found in Camelus bactrianus (Bactrian camel).